We begin with the raw amino-acid sequence, 153 residues long: Arginine repressor (153 aa).

Belongs to the ArgR family.

The protein localises to the cytoplasm. Its pathway is amino-acid biosynthesis; L-arginine biosynthesis [regulation]. Its function is as follows. Regulates arginine biosynthesis genes. The sequence is that of Arginine repressor from Acetivibrio thermocellus (strain ATCC 27405 / DSM 1237 / JCM 9322 / NBRC 103400 / NCIMB 10682 / NRRL B-4536 / VPI 7372) (Clostridium thermocellum).